The chain runs to 308 residues: Putative hydrolase MT0526 (308 aa).

Positions methionine 1–aspartate 48 are disordered. Aspartate 62 acts as the Nucleophile in catalysis. Mg(2+)-binding residues include aspartate 62, aspartate 64, and aspartate 237. The Proton donor role is filled by aspartate 64.

This sequence belongs to the HAD-like hydrolase superfamily. SerB family. Mg(2+) serves as cofactor.

In Mycobacterium tuberculosis (strain CDC 1551 / Oshkosh), this protein is Putative hydrolase MT0526.